We begin with the raw amino-acid sequence, 1083 residues long: Error-prone DNA polymerase (1083 aa).

This sequence belongs to the DNA polymerase type-C family. DnaE2 subfamily.

It is found in the cytoplasm. It catalyses the reaction DNA(n) + a 2'-deoxyribonucleoside 5'-triphosphate = DNA(n+1) + diphosphate. Functionally, DNA polymerase involved in damage-induced mutagenesis and translesion synthesis (TLS). It is not the major replicative DNA polymerase. The sequence is that of Error-prone DNA polymerase from Xanthomonas axonopodis pv. citri (strain 306).